We begin with the raw amino-acid sequence, 544 residues long: Chaperonin GroEL (544 aa).

Residues 30–33 (TLGP), Lys51, 87–91 (DGTTT), Gly415, 479–481 (NAA), and Asp495 each bind ATP.

Belongs to the chaperonin (HSP60) family. In terms of assembly, forms a cylinder of 14 subunits composed of two heptameric rings stacked back-to-back. Interacts with the co-chaperonin GroES.

It localises to the cytoplasm. It carries out the reaction ATP + H2O + a folded polypeptide = ADP + phosphate + an unfolded polypeptide.. Its function is as follows. Together with its co-chaperonin GroES, plays an essential role in assisting protein folding. The GroEL-GroES system forms a nano-cage that allows encapsulation of the non-native substrate proteins and provides a physical environment optimized to promote and accelerate protein folding. This Francisella tularensis subsp. holarctica (strain FTNF002-00 / FTA) protein is Chaperonin GroEL.